A 451-amino-acid chain; its full sequence is Proton-coupled amino acid transporter-like protein acs (451 aa).

The Cytoplasmic portion of the chain corresponds to 1 to 48; it reads MNDDIKTVTVYPTTLELTTPTKSANGSNDDYDPHQHRELKNPTTNFQT. A helical membrane pass occupies residues 49–69; the sequence is FAHFLKASVGTGVLAMPSAFA. Topologically, residues 70 to 80 are extracellular; it reads HAGYVNGTLLT. N75 is a glycosylation site (N-linked (GlcNAc...) asparagine). Residues 81–101 traverse the membrane as a helical segment; the sequence is LIIGSLALYCLHILIKCMYIL. Residues 102–136 are Cytoplasmic-facing; it reads CKRQRVPYVSFSQAMNLGLKQGPPWLRCLAPIAVP. Residues 137–157 traverse the membrane as a helical segment; it reads FVDGFLAFYHFGICCVYVVFI. At 158-167 the chain is on the extracellular side; the sequence is AESIKQLVDE. Residues 168–188 traverse the membrane as a helical segment; sequence YLVVWDVRIHMCIIIVPLLLI. Topologically, residues 189–199 are cytoplasmic; sequence YSIKNLKLLAP. Residues 200 to 220 traverse the membrane as a helical segment; it reads FSSAANLLLLVGFGIILYYIF. Residues 221–237 lie on the Extracellular side of the membrane; the sequence is EELPPLSERDPFVAAGK. Residues 238-258 form a helical membrane-spanning segment; that stretch reads LPTFFGTVLFALEAVGVILAI. Over 259–272 the chain is Cytoplasmic; sequence EENMATPKSFVGPC. The chain crosses the membrane as a helical span at residues 273-293; the sequence is GILNSGMSIVLGLYVLLGFFG. Residues 294 to 320 lie on the Extracellular side of the membrane; the sequence is YWKYGNESEGSITLNIPQSEIPAQVVK. N299 is a glycosylation site (N-linked (GlcNAc...) asparagine). The chain crosses the membrane as a helical span at residues 321 to 341; sequence VFFAITTWISYALQGYVTAHI. At 342–357 the chain is on the cytoplasmic side; that stretch reads LWDKYLAKRFKETRQT. A helical transmembrane segment spans residues 358–378; sequence FYELIFRAIIVLLTFGCAVAI. Residues 379 to 382 are Extracellular-facing; that stretch reads PDLS. A helical transmembrane segment spans residues 383–403; the sequence is VFLSLVGSFCLSILGLIFPVL. Residues 404–420 are Cytoplasmic-facing; that stretch reads LQICVQYTEGYGPFRIK. A helical membrane pass occupies residues 421 to 441; it reads LIINLLLLCFGIFGGVVGTYV. Topologically, residues 442–451 are extracellular; it reads SILDIIAVYK.

The protein belongs to the amino acid/polyamine transporter 2 family. In terms of tissue distribution, expressed in the proximal and distal regions of the midgut; expressed in enterocytes and progenitor cells. Expression increases in response to intestinal bacterial infection and spreads further into the midgut, eventually covering the entire midgut.

Its subcellular location is the cell membrane. It is found in the late endosome membrane. The protein localises to the lysosome membrane. The protein resides in the basal cell membrane. Functionally, amino acid transporter which has pH-dependent electrogenic transport activity for alanine, glycine and proline. Plays a role in positive regulation of growth by directly or indirectly modulating the effects of the TOR signaling pathway. Required in enterocytes for the efficient recovery of gut epithelium following the cytoplasmic purge response to bacterial infection. Acts cell-autonomously to promote the retrograde transport of amino acids into the intestinal epithelium. Acts non-cell-autonomously through the insulin signaling pathway to stimulate Myc expression and the release of amino acids from nutrient stores into the hemolymph. This is Proton-coupled amino acid transporter-like protein acs from Drosophila melanogaster (Fruit fly).